Reading from the N-terminus, the 279-residue chain is Digeranylgeranylglyceryl phosphate synthase (279 aa).

Transmembrane regions (helical) follow at residues 27-47, 90-110, 127-147, 199-219, 222-242, and 259-279; these read LIAT…VALI, FVGG…IAII, VLGN…GGAF, TGIF…LPFG, WGLF…FGAF, and TSIL…AAVI.

Belongs to the UbiA prenyltransferase family. DGGGP synthase subfamily. Mg(2+) is required as a cofactor.

The protein resides in the cell membrane. The catalysed reaction is sn-3-O-(geranylgeranyl)glycerol 1-phosphate + (2E,6E,10E)-geranylgeranyl diphosphate = 2,3-bis-O-(geranylgeranyl)-sn-glycerol 1-phosphate + diphosphate. It functions in the pathway membrane lipid metabolism; glycerophospholipid metabolism. In terms of biological role, prenyltransferase that catalyzes the transfer of the geranylgeranyl moiety of geranylgeranyl diphosphate (GGPP) to the C2 hydroxyl of (S)-3-O-geranylgeranylglyceryl phosphate (GGGP). This reaction is the second ether-bond-formation step in the biosynthesis of archaeal membrane lipids. In Methanoculleus marisnigri (strain ATCC 35101 / DSM 1498 / JR1), this protein is Digeranylgeranylglyceryl phosphate synthase.